Here is a 707-residue protein sequence, read N- to C-terminus: MNQELLSVGSKRRRTGGSLRGNPSSSQVDEEQMNRVVEEEQQQQLRQQEEEHTARNGEVVGVEPRPGGQNDSQQGQLEENNNRFISVDEDSSGNQEEQEEDEEHAGEQDEEDEEEEEMDQESDDFDQSDDSSREDEHTHTNSVTNSSSIVDLPVHQLSSPFYTKTTKMKRKLDHGSEVRSFSLGKKPCKVSEYTSTTGLVPCSATPTTFGDLRAANGQGQQRRRITSVQPPTGLQEWLKMFQSWSGPEKLLALDELIDSCEPTQVKHMMQVIEPQFQRDFISLLPKELALYVLSFLEPKDLLQAAQTCRYWRILAEDNLLWREKCKEEGIDEPLHIKRRKVIKPGFIHSPWKSAYIRQHRIDTNWRRGELKSPKVLKGHDDHVITCLQFCGNRIVSGSDDNTLKVWSAVTGKCLRTLVGHTGGVWSSQMRDNIIISGSTDRTLKVWNAETGECIHTLYGHTSTVRCMHLHEKRVVSGSRDATLRVWDIETGQCLHVLMGHVAAVRCVQYDGRRVVSGAYDFMVKVWDPETETCLHTLQGHTNRVYSLQFDGIHVVSGSLDTSIRVWDVETGNCIHTLTGHQSLTSGMELKDNILVSGNADSTVKIWDIKTGQCLQTLQGPNKHQSAVTCLQFNKNFVITSSDDGTVKLWDLKTGEFIRNLVTLESGGSGGVVWRIRASNTKLVCAVGSRNGTEETKLLVLDFDVDMK.

The tract at residues 1–151 is disordered; it reads MNQELLSVGS…SVTNSSSIVD (151 aa). Position 26 is a phosphoserine; by ATM (S26). Low complexity predominate over residues 57-68; sequence GEVVGVEPRPGG. A compositionally biased stretch (polar residues) spans 69-84; it reads QNDSQQGQLEENNNRF. Residues 87 to 129 show a composition bias toward acidic residues; sequence VDEDSSGNQEEQEEDEEHAGEQDEEDEEEEEMDQESDDFDQSD. Residues 130-139 are compositionally biased toward basic and acidic residues; sequence DSSREDEHTH. Residue T205 is modified to Phosphothreonine. S227 is subject to Phosphoserine; by SGK1. Positions 278–324 constitute an F-box domain; sequence RDFISLLPKELALYVLSFLEPKDLLQAAQTCRYWRILAEDNLLWREK. 7 WD repeats span residues 378-418, 420-456, 459-498, 500-536, 539-578, 580-618, and 622-659; these read GHDD…RTLV, HTGG…CIHT, GHTS…HVLM, HVAA…CLHT, GHTN…HTLT, HQSL…QTLQ, and KHQS…FIRN.

In terms of assembly, homodimer; homodimerization plays a role in substrate binding and/or ubiquitination and degradation. Component of the SCF(FBXW7) complex consisting of CUL1, RBX1, SKP1 and FBXW7. Interacts (via F-box domain) with SKP1. Interacts (via F-box domain) with pseudophosphatase STYX; the interaction is direct and prevents FBXW7 interaction with SKP1. Interacts with cyclin-E (CCNE1 or CCNE2). Interacts with PSEN1. Forms a trimeric complex with NOTCH1 and SGK1. Interacts with NOTCH1 intracellular domain/NICD and NOTCH4 intracellular domain/NICD. Interacts with NOTCH2 intracellular domain (N2ICD). Interacts with MYC (when phosphorylated). Interacts with USP28, counteracting ubiquitination of MYC. Interacts with JUN. Found in a complex with JUN and PRR7. Interacts with JUN and PRR7; the interaction inhibits ubiquitination-mediated JUN degradation, promoting its phosphorylation and transcriptional activity. Interacts (when phosphorylated at Thr-205) with PIN1, disrupting FBXW7 dimerization and promoting FBXW7 autoubiquitination and degradation. Interacts with UBE2QL1. Interacts with FAM83D; promotes FBXW7 degradation. Interacts with MYCN; FBXW7 competes with AURKA for binding to unphosphorylated MYCN but not for binding to phosphorylated MYCN. Interacts with STOML1. Interacts with NFE2L1. Interacts with USP36, counteracting ubiquitination of MYC. Interacts with NR1D1. Interacts with RICTOR; mediates RICTOR ubiquitination and degradation. Interacts with USP38, counteracting ubiquitination of MYC. As to quaternary structure, (Microbial infection) Interacts (via WD repeats) with SV40 large T antigen (via CPD region). Phosphorylation at Thr-205 promotes interaction with PIN1, leading to disrupt FBXW7 dimerization and promoting FBXW7 autoubiquitination and degradation. Phosphorylated by ATM at Ser-26 in response to DNA damage, promoting recruitment to DNA damage sites and 'Lys-63'-linked ubiquitination of phosphorylated XRCC4. Post-translationally, ubiquitinated: autoubiquitinates following phosphorylation at Thr-205 and subsequent interaction with PIN1. Ubiquitination leads to its proteasomal degradation. As to expression, widely expressed. Expressed in brain.

It is found in the nucleus. Its subcellular location is the nucleoplasm. The protein resides in the chromosome. It localises to the cytoplasm. The protein localises to the nucleolus. The protein operates within protein modification; protein ubiquitination. Its function is as follows. Substrate recognition component of a SCF (SKP1-CUL1-F-box protein) E3 ubiquitin-protein ligase complex which mediates the ubiquitination and subsequent proteasomal degradation of target proteins. Recognizes and binds phosphorylated sites/phosphodegrons within target proteins and thereafter brings them to the SCF complex for ubiquitination. Identified substrates include cyclin-E (CCNE1 or CCNE2), DISC1, JUN, MYC, NOTCH1 released notch intracellular domain (NICD), NFE2L1, NOTCH2, MCL1, MLST8, RICTOR, and probably PSEN1. Acts as a negative regulator of JNK signaling by binding to phosphorylated JUN and promoting its ubiquitination and subsequent degradation. Involved in bone homeostasis and negative regulation of osteoclast differentiation. Regulates the amplitude of the cyclic expression of hepatic core clock genes and genes involved in lipid and glucose metabolism via ubiquitination and proteasomal degradation of their transcriptional repressor NR1D1; CDK1-dependent phosphorylation of NR1D1 is necessary for SCF(FBXW7)-mediated ubiquitination. Also able to promote 'Lys-63'-linked ubiquitination in response to DNA damage. The SCF(FBXW7) complex facilitates double-strand break repair following phosphorylation by ATM: phosphorylation promotes localization to sites of double-strand breaks and 'Lys-63'-linked ubiquitination of phosphorylated XRCC4, enhancing DNA non-homologous end joining. In Homo sapiens (Human), this protein is F-box/WD repeat-containing protein 7.